The following is a 574-amino-acid chain: C6 finger transcription factor poxB (574 aa).

Residues 19–51 (CDRCRGQKLRCERPVSNSSTTPCRRCLKAHVRC) constitute a DNA-binding region (zn(2)-C6 fungal-type). 3 disordered regions span residues 111–133 (PRRL…GRTR), 242–262 (SSLQ…ESRH), and 376–404 (LNQT…SASA).

Its subcellular location is the nucleus. Its function is as follows. Transcription factor that positively regulates the expression of the gene cluster that mediates the biosynthesis of oxaleimides, cytotoxic compounds containing an unusual disubstituted succinimide moiety. The polypeptide is C6 finger transcription factor poxB (Penicillium oxalicum).